The primary structure comprises 120 residues: Ribonuclease P protein component 2 (120 aa).

This sequence belongs to the eukaryotic/archaeal RNase P protein component 2 family. In terms of assembly, homodimer in solution. Component of RNase P which consists of a catalytic RNA component and at least 5 protein subunits. Forms a heterotetrameric subcomplex with Rnp3. Reconstituted enzyme missing individual protein subunits is suboptimally active, showing each subunit contributes to optimization of activity.

The protein localises to the cytoplasm. The enzyme catalyses Endonucleolytic cleavage of RNA, removing 5'-extranucleotides from tRNA precursor.. Part of ribonuclease P, a protein complex that generates mature tRNA molecules by cleaving their 5'-ends. The sequence is that of Ribonuclease P protein component 2 from Pyrococcus horikoshii (strain ATCC 700860 / DSM 12428 / JCM 9974 / NBRC 100139 / OT-3).